The primary structure comprises 348 residues: Dihydroorotase (348 aa).

Residues H17 and H19 each contribute to the Zn(2+) site. Substrate contacts are provided by residues 19–21 and N45; that span reads HLR. K103, H140, and H178 together coordinate Zn(2+). K103 is subject to N6-carboxylysine. H140 is a substrate binding site. Residue L223 participates in substrate binding. Zn(2+) is bound at residue D251. D251 is an active-site residue. 2 residues coordinate substrate: H255 and A267.

It belongs to the metallo-dependent hydrolases superfamily. DHOase family. Class II DHOase subfamily. As to quaternary structure, homodimer. Zn(2+) serves as cofactor.

The enzyme catalyses (S)-dihydroorotate + H2O = N-carbamoyl-L-aspartate + H(+). The protein operates within pyrimidine metabolism; UMP biosynthesis via de novo pathway; (S)-dihydroorotate from bicarbonate: step 3/3. Functionally, catalyzes the reversible cyclization of carbamoyl aspartate to dihydroorotate. This Escherichia coli O157:H7 protein is Dihydroorotase.